We begin with the raw amino-acid sequence, 88 residues long: Small ribosomal subunit protein uS19 (88 aa).

This sequence belongs to the universal ribosomal protein uS19 family.

Functionally, protein S19 forms a complex with S13 that binds strongly to the 16S ribosomal RNA. The polypeptide is Small ribosomal subunit protein uS19 (rpsS) (Chlamydia pneumoniae (Chlamydophila pneumoniae)).